Here is a 136-residue protein sequence, read N- to C-terminus: Large ribosomal subunit protein uL16c (136 aa).

This sequence belongs to the universal ribosomal protein uL16 family. In terms of assembly, part of the 50S ribosomal subunit.

The protein localises to the plastid. Its subcellular location is the chloroplast. In Illicium oligandrum (Star anise), this protein is Large ribosomal subunit protein uL16c.